Reading from the N-terminus, the 120-residue chain is Holo-[acyl-carrier-protein] synthase (120 aa).

Mg(2+) is bound by residues aspartate 8 and glutamate 60.

This sequence belongs to the P-Pant transferase superfamily. AcpS family. The cofactor is Mg(2+).

The protein resides in the cytoplasm. It carries out the reaction apo-[ACP] + CoA = holo-[ACP] + adenosine 3',5'-bisphosphate + H(+). Its function is as follows. Transfers the 4'-phosphopantetheine moiety from coenzyme A to a Ser of acyl-carrier-protein. The protein is Holo-[acyl-carrier-protein] synthase of Anaplasma marginale (strain St. Maries).